A 304-amino-acid polypeptide reads, in one-letter code: PHO85 cyclin-9 (304 aa).

One can recognise a Cyclin N-terminal domain in the interval 19–146 (EMIQFLATST…LLEYLNWDVR (128 aa)).

It belongs to the cyclin family. PCL1,2 subfamily. In terms of assembly, forms a cyclin-CDK complex with PHO85.

Functionally, m/G1-specific cyclin partner of the cyclin-dependent kinase (CDK) PHO85. May have a role in bud site selection in G1 phase. In Saccharomyces cerevisiae (strain ATCC 204508 / S288c) (Baker's yeast), this protein is PHO85 cyclin-9 (PCL9).